Here is a 344-residue protein sequence, read N- to C-terminus: N-acetyl-gamma-glutamyl-phosphate reductase 1 (344 aa).

C150 is an active-site residue.

The protein belongs to the NAGSA dehydrogenase family. Type 1 subfamily.

Its subcellular location is the cytoplasm. The catalysed reaction is N-acetyl-L-glutamate 5-semialdehyde + phosphate + NADP(+) = N-acetyl-L-glutamyl 5-phosphate + NADPH + H(+). It participates in amino-acid biosynthesis; L-arginine biosynthesis; N(2)-acetyl-L-ornithine from L-glutamate: step 3/4. Its function is as follows. Catalyzes the NADPH-dependent reduction of N-acetyl-5-glutamyl phosphate to yield N-acetyl-L-glutamate 5-semialdehyde. The sequence is that of N-acetyl-gamma-glutamyl-phosphate reductase 1 from Pseudomonas putida (strain ATCC 47054 / DSM 6125 / CFBP 8728 / NCIMB 11950 / KT2440).